Here is a 146-residue protein sequence, read N- to C-terminus: Large ribosomal subunit protein uL15 (146 aa).

Residues 1 to 13 (MKLHELKPAEGSR) are compositionally biased toward basic and acidic residues. The tract at residues 1–51 (MKLHELKPAEGSRKVRNRVGRGIGSGNGKTAGKGHKGQNARSGGGVRLGFE) is disordered. Composition is skewed to gly residues over residues 21–31 (RGIGSGNGKTA) and 42–51 (SGGGVRLGFE).

It belongs to the universal ribosomal protein uL15 family. As to quaternary structure, part of the 50S ribosomal subunit.

Functionally, binds to the 23S rRNA. The chain is Large ribosomal subunit protein uL15 from Bacillus cereus (strain G9842).